The primary structure comprises 36 residues: Photosystem I reaction center subunit VIII (36 aa).

Residues 1 to 21 form a helical membrane-spanning segment; sequence MITFSFPSIFVPLVGLVFPAI.

Belongs to the PsaI family.

Its subcellular location is the plastid. The protein resides in the chloroplast thylakoid membrane. In terms of biological role, may help in the organization of the PsaL subunit. The polypeptide is Photosystem I reaction center subunit VIII (Coffea arabica (Arabian coffee)).